Consider the following 1809-residue polypeptide: MSLGELLETCRSRRIELWSEAGRLRYRAPQGALDAGLAERLRAEREALLEHLEGGPGWRAEPDLAHQRFPLTPVQAAYVLGRQAAFDYGGNACQLYAEYDWPADTDPARLEAAWNAMVERHPMLRAVIEDNAWQRVLPEVPWQRLTVHACAGLDEAAFQAHLERVRERLDHACAALDQWPVLRPELSIGRDDCVLHCSVDFTLVDYASLQLLLGEWRRRYLDPQWTAEPLEATFRDYVGVEQRRRQSPAWQRDRDWWLARLDALPGRPDLPLRAQPDTRSTRFRHFHARLDEAAWQALGARAGEHGLSAAGVALAAFAETIGRWSQAPAFCLNLTVLNRPPLHPQLAQVLGDFTALSLLAVDSRHGDSFVERARRIGEQMFDDLDHPTFSGVDLLRELARRRGRGADLMPVVFTSGIGSVQRLLGDGEAPRAPRYMISQTPQVWLDCQVTDQFGGLEIGWDVRLGLFPEGQAEAMFDDFVGLLRRLAQSPRAWTDGDATEPVEAPPQALPGSARSIAAGFAERALLTPDATVIHDAAGSYSYRQVAQHASALRRVLEAHGAGRGRRVAVMLPKSAAQLVAVIGILQAGAAYVPVDIRQPPLRRQAILASPEVVAWVCLESDVPNAGCACVAIDRLAADSAWPPPPAAEVAADDLAYVIYTSGSTGTPKGVMLSHAAVSNTLLDINQRYGVDANDRVLGLAELSFDLSVYDFFGATAAGAQVVLPDPARGSDPSHWAELLERHAITLWNSVPAQGQMLIDYLESEPQRHLPGPRCVLWSGDWIPVSLPTRWWRRWPDSALFSLGGATEAAIWSIEQPIRPQHTELASIPYGRALRGQSVEVLDARGRRCPPGVRGEIHIGGVGLALGYAGDPQRTAERFVRHPDGRRLYRTGDLGRYLADGSIEFLGREDDQVKIRGHRIELAELDAALCAHPQVNLAATVVLGETHERSLASFVTLHAPAEAGEDPRTALDTVRQRAAQALRRDWGSEEGIAAAVAALDRACLASLAAWLAGSGLFASATPLDFATLCQRLGIAEARQRLLRHWLRQLEEGGYLRAEGEGWLGCAERPAQSPEDAWTAFAGCAPAALWPAELVAYLRDSAQSLGEQLAGRISPAALMFPQGSARIAEAMYSQGLHAQALHEAMAEAIAAIVERQPQRRWRLLELGAGTAAASRAVIARLAPLVQRGTEVDYLFTDVSSYFLAAARERFADQPWVRFGRFDMNGDLLDQGVAPHSVDILLSSGALNNALDTPALLAGLRELLSADAWLVIQELTREHNEISVSQSLMMENPRDLRDERRQLFVHTGQWLEWLAAQGGDLACGVVPPGSALDLLGYDVLLARCKTDRARLEPAELLAFVEARVPRYMLPAQLRVLERLPVTGNGKIDRKALTGFARQPQADLRHGVAQAPADELESALLALWREVLDNPSLGVEQDFFGAGGDSLLIAQLIARLRERLESARRHPFDRLLRWALSQPTPRGLAERLRSAPEEGRGPALAAARGVAPAQTGMSRAPLAEGAVALDPLVRLVPGEGVPRVLVHEGLGTLLPYRPLLRALGEGRPLLGLAVHDSDAYLAIPAEYLNACLGRRYAEALHGAGLREVDLLGYCSGGLVALETAKSLLQRGVRVRQLDIVSSYRIPYRVDDERLLLFSFAATLGLDTAALGFPAPERLGQAVQAALAQTPERLGAEALAGLPGLADLVALRGRVLQAASGSADAASVERDTLYRLFCHSVRASQAEALEPYVGALRLFVPDAGNPLVPRYAEALETQWRAAALGACGIHEVPGGHFDCLGEALAQSLSKPMPEEASQ.

Residues 69–490 are condensation/cyclization; that stretch reads FPLTPVQAAY…GLLRRLAQSP (422 aa). Residues 520-915 form an adenylation region; that stretch reads FAERALLTPD…GREDDQVKIR (396 aa). The Carrier domain occupies 1407–1488; the sequence is APADELESAL…GLAERLRSAP (82 aa). At Ser1442 the chain carries O-(pantetheine 4'-phosphoryl)serine. A thioesterase region spans residues 1584 to 1797; that stretch reads LGRRYAEALH…FDCLGEALAQ (214 aa).

It belongs to the NRP synthetase family. Pantetheine 4'-phosphate is required as a cofactor.

It catalyses the reaction holo-[peptidyl-carrier protein] + L-cysteine + ATP = L-cysteinyl-[peptidyl-carrier protein] + AMP + diphosphate. Its pathway is siderophore biosynthesis. Functionally, involved in the biosynthesis of the siderophore pyochelin. Adenylates L-cysteine and loads it onto its peptidyl carrier domain via a thioester linkage to the phosphopanthetheine moiety. Then forms a peptide bond between the salicyl-thiazolinyl intermediate bound to the second carrier domain of PchE and the cysteine bound to its own peptidyl carrier domain to form the salicyl-thiazolinyl-cysteinyl-S-PCP2 intermediate. It subsequently cyclizes the C-terminal cysteine to form the second thiazoline heterocycle in the salicyl-thiazolinyl-thiazolinyl-S-PCP2 intermediate. When this intermediate is released by the action of a thioesterase, it produces the tricyclic acid hydroxyphenyl-thiazolyl-thiazolinyl-carboxylic acid (HPTT-COOH), an advanced intermediate containing the aryl-4,2-bis-heterocyclic skeleton of the bithiazoline class of siderophores. This chain is Pyochelin synthetase PchF, found in Pseudomonas aeruginosa (strain UCBPP-PA14).